A 566-amino-acid polypeptide reads, in one-letter code: Proline--tRNA ligase (566 aa).

The protein belongs to the class-II aminoacyl-tRNA synthetase family. ProS type 1 subfamily. As to quaternary structure, homodimer.

Its subcellular location is the cytoplasm. It catalyses the reaction tRNA(Pro) + L-proline + ATP = L-prolyl-tRNA(Pro) + AMP + diphosphate. Functionally, catalyzes the attachment of proline to tRNA(Pro) in a two-step reaction: proline is first activated by ATP to form Pro-AMP and then transferred to the acceptor end of tRNA(Pro). As ProRS can inadvertently accommodate and process non-cognate amino acids such as alanine and cysteine, to avoid such errors it has two additional distinct editing activities against alanine. One activity is designated as 'pretransfer' editing and involves the tRNA(Pro)-independent hydrolysis of activated Ala-AMP. The other activity is designated 'posttransfer' editing and involves deacylation of mischarged Ala-tRNA(Pro). The misacylated Cys-tRNA(Pro) is not edited by ProRS. This is Proline--tRNA ligase from Shouchella clausii (strain KSM-K16) (Alkalihalobacillus clausii).